The chain runs to 555 residues: T-complex protein 1 subunit gamma (555 aa).

The segment at lysine 527–aspartate 555 is disordered.

Belongs to the TCP-1 chaperonin family. Heterooligomeric complex of about 850 to 900 kDa that forms two stacked rings, 12 to 16 nm in diameter. Interacts with CCT8.

It is found in the cytoplasm. Functionally, molecular chaperone; assists the folding of proteins upon ATP hydrolysis. Known to play a role, in vitro, in the folding of actin and tubulin. The polypeptide is T-complex protein 1 subunit gamma (Arabidopsis thaliana (Mouse-ear cress)).